A 229-amino-acid polypeptide reads, in one-letter code: Somatolactin (229 aa).

A signal peptide spans 1 to 21 (MAALQEVLLAVLLWPVLVTIS). 3 disulfide bridges follow: Cys26–Cys36, Cys87–Cys203, and Cys220–Cys228. Asn143 is a glycosylation site (N-linked (GlcNAc...) asparagine).

Belongs to the somatotropin/prolactin family. In terms of tissue distribution, pituitary gland.

It localises to the secreted. The protein is Somatolactin of Tetraodon miurus (Congo puffer).